Consider the following 278-residue polypeptide: Small ribosomal subunit protein uS2 (278 aa).

Residues 233 to 257 (IDMEAAGEAPANKGKKKSVKARLDK) form a disordered region.

The protein belongs to the universal ribosomal protein uS2 family.

The protein is Small ribosomal subunit protein uS2 of Bacteroides thetaiotaomicron (strain ATCC 29148 / DSM 2079 / JCM 5827 / CCUG 10774 / NCTC 10582 / VPI-5482 / E50).